The sequence spans 590 residues: Protein phosphatase PP2A regulatory subunit A (590 aa).

11 HEAT repeats span residues 12–50 (PIAV…TRDE), 89–127 (LLSP…LEQY), 206–244 (FIPL…EIRH), 246–284 (LLQP…IKDE), 285–323 (LIKP…VLEE), 324–362 (IIPV…TTEY), 363–401 (LLPM…LSQS), 402–440 (LLPA…FNEK), 480–518 (IIPK…IEKQ), 519–551 (ILPT…VLAA), and 562–590 (IIPL…QTND).

This sequence belongs to the phosphatase 2A regulatory subunit A family. In terms of assembly, PP2A exists in several trimeric forms, all of which consist of a core composed of a catalytic subunit associated with a 65 kDa (PR65) (Subunit A) and a 55 kDa (PR55) (Subunit B) regulatory subunit.

In terms of biological role, phosphatase 2A affects a variety of biological processes in the cell such as transcription, cell cycle progression and cellular morphogenesis, and provides an initial identification of critical substrates for this phosphatase. The regulatory subunit may direct the catalytic subunit to distinct, albeit overlapping, subsets of substrates. The sequence is that of Protein phosphatase PP2A regulatory subunit A (paa1) from Schizosaccharomyces pombe (strain 972 / ATCC 24843) (Fission yeast).